The primary structure comprises 75 residues: Small ribosomal subunit protein bS18 (75 aa).

It belongs to the bacterial ribosomal protein bS18 family. In terms of assembly, part of the 30S ribosomal subunit. Forms a tight heterodimer with protein bS6.

Binds as a heterodimer with protein bS6 to the central domain of the 16S rRNA, where it helps stabilize the platform of the 30S subunit. The protein is Small ribosomal subunit protein bS18 of Pseudoalteromonas translucida (strain TAC 125).